Here is a 1411-residue protein sequence, read N- to C-terminus: Protein ECM5 (1411 aa).

The 42-residue stretch at 118 to 159 (IPTFILAKKELPDPIKFYELVEDLGSVYGCVKLKIIPDADKF) folds into the JmjN domain. Positions 185–279 (RTKIVDFYAK…ILLDFDIYEE (95 aa)) constitute an ARID domain. A disordered region spans residues 285-312 (RNNEKNEDMVESEIFRHSNSRSRDEEEP). The region spanning 476–695 (KNILDQWNLD…FSSEAAKWTS (220 aa)) is the JmjC domain. The PHD-type zinc finger occupies 1238–1290 (TKYCFCRRVEEGTAMVECEICKEWYHVDCISNGELVPPDDPNVLFVCSICTPP).

It is found in the nucleus. Functionally, may be involved in cell wall organization and biogenesis. This chain is Protein ECM5 (ECM5), found in Saccharomyces cerevisiae (strain ATCC 204508 / S288c) (Baker's yeast).